The sequence spans 538 residues: Anti-bacteriophage protein A (538 aa).

In terms of assembly, interacts with AbpB.

In terms of biological role, part of an antiviral system composed of AbpA and AbpB; when both are expressed from a plasmid they confer resistance to phages T2, T4, T7 and lambda but not RB32 or RB69. Resistance is temperature dependent, it can be seen at 30 degrees Celsius but not at 37 or 42 degrees Celsius. The system impairs phage but not bacterial DNA synthesis (shown for T4, T7 and lambda). Partially suppressed by mutations in T4 gene 41, a replicative helicase. This chain is Anti-bacteriophage protein A, found in Escherichia coli (strain K12).